Here is a 222-residue protein sequence, read N- to C-terminus: MSNLYGDYNQKIDYVFKVVLIGDSAVGKTQLLARFARNEFSVDSKATIGVEFQTKTLVIDNKTVKAQIWDTAGQERYRAVTSAYYRGAVGAMLVYDMTKRQSFDHMAKWLEELRGHADKNIVIMLIGNKCDLGSLRAVPTEDAQEFAQRENLFFMETSALEATNVETAFLTILTEIYRIISKKSLTADDDDADGNSSLLKGTRIIIPSEQESGKRGGCCGKS.

22 to 29 is a binding site for GTP; that stretch reads GDSAVGKT. The Effector region motif lies at 44 to 52; sequence SKATIGVEF. GTP is bound by residues 70 to 74, 128 to 131, and 158 to 159; these read DTAGQ, NKCD, and SA. S-geranylgeranyl cysteine attachment occurs at residues Cys218 and Cys219.

Belongs to the small GTPase superfamily. Rab family. As to quaternary structure, interacts with PI4KB1. Specifically expressed in pollen and localized to the tips of growing pollen tubes.

Its subcellular location is the cytoplasmic vesicle membrane. Intracellular vesicle trafficking and protein transport. Plays an important role in the regulation of pollen tube tip growth. This Arabidopsis thaliana (Mouse-ear cress) protein is Ras-related protein RABA4d (RABA4D).